Consider the following 286-residue polypeptide: Bifunctional protein FolD (286 aa).

NADP(+)-binding positions include 166–168 and isoleucine 232; that span reads GAS.

Belongs to the tetrahydrofolate dehydrogenase/cyclohydrolase family. In terms of assembly, homodimer.

It catalyses the reaction (6R)-5,10-methylene-5,6,7,8-tetrahydrofolate + NADP(+) = (6R)-5,10-methenyltetrahydrofolate + NADPH. The enzyme catalyses (6R)-5,10-methenyltetrahydrofolate + H2O = (6R)-10-formyltetrahydrofolate + H(+). Its pathway is one-carbon metabolism; tetrahydrofolate interconversion. Catalyzes the oxidation of 5,10-methylenetetrahydrofolate to 5,10-methenyltetrahydrofolate and then the hydrolysis of 5,10-methenyltetrahydrofolate to 10-formyltetrahydrofolate. The protein is Bifunctional protein FolD of Blochmanniella pennsylvanica (strain BPEN).